A 303-amino-acid polypeptide reads, in one-letter code: 4-diphosphocytidyl-2-C-methyl-D-erythritol kinase (303 aa).

Lysine 21 is a catalytic residue. 106 to 116 is an ATP binding site; sequence PVAAGIGGGSA. Residue aspartate 148 is part of the active site.

This sequence belongs to the GHMP kinase family. IspE subfamily.

The enzyme catalyses 4-CDP-2-C-methyl-D-erythritol + ATP = 4-CDP-2-C-methyl-D-erythritol 2-phosphate + ADP + H(+). It functions in the pathway isoprenoid biosynthesis; isopentenyl diphosphate biosynthesis via DXP pathway; isopentenyl diphosphate from 1-deoxy-D-xylulose 5-phosphate: step 3/6. Catalyzes the phosphorylation of the position 2 hydroxy group of 4-diphosphocytidyl-2C-methyl-D-erythritol. The protein is 4-diphosphocytidyl-2-C-methyl-D-erythritol kinase of Nitrobacter hamburgensis (strain DSM 10229 / NCIMB 13809 / X14).